The following is a 207-amino-acid chain: LexA repressor (207 aa).

Residues 28 to 48 (VREIGEAVGLASSSTVHGHLS) constitute a DNA-binding region (H-T-H motif). Residues Ser130 and Lys168 each act as for autocatalytic cleavage activity in the active site.

This sequence belongs to the peptidase S24 family. As to quaternary structure, homodimer.

The catalysed reaction is Hydrolysis of Ala-|-Gly bond in repressor LexA.. Represses a number of genes involved in the response to DNA damage (SOS response), including recA and lexA. In the presence of single-stranded DNA, RecA interacts with LexA causing an autocatalytic cleavage which disrupts the DNA-binding part of LexA, leading to derepression of the SOS regulon and eventually DNA repair. This chain is LexA repressor, found in Staphylococcus haemolyticus (strain JCSC1435).